A 97-amino-acid polypeptide reads, in one-letter code: MDKQSSAGGVKRSVPCDSNEANEMMPETPTGDSDPQPAPKKMKTSESSTILVVRYRRNFKRTSPEELLNDHARENRINPLQMEEEEFMEIMVEIPAK.

The tract at residues 1-49 (MDKQSSAGGVKRSVPCDSNEANEMMPETPTGDSDPQPAPKKMKTSESST) is disordered. The short motif at 37–45 (PAPKKMKTS) is the Nuclear localization signal element.

It belongs to the SPAN-X family. Detected in testis and sperm.

The protein resides in the cytoplasm. It localises to the nucleus. This chain is Sperm protein associated with the nucleus on the X chromosome A, found in Homo sapiens (Human).